Consider the following 115-residue polypeptide: Large ribosomal subunit protein bL19 (115 aa).

This sequence belongs to the bacterial ribosomal protein bL19 family.

This protein is located at the 30S-50S ribosomal subunit interface and may play a role in the structure and function of the aminoacyl-tRNA binding site. This Bacillus velezensis (strain DSM 23117 / BGSC 10A6 / LMG 26770 / FZB42) (Bacillus amyloliquefaciens subsp. plantarum) protein is Large ribosomal subunit protein bL19.